Here is a 374-residue protein sequence, read N- to C-terminus: Tetraacyldisaccharide 4'-kinase (374 aa).

59 to 66 (TAGGTGKT) provides a ligand contact to ATP.

The protein belongs to the LpxK family.

The catalysed reaction is a lipid A disaccharide + ATP = a lipid IVA + ADP + H(+). It participates in glycolipid biosynthesis; lipid IV(A) biosynthesis; lipid IV(A) from (3R)-3-hydroxytetradecanoyl-[acyl-carrier-protein] and UDP-N-acetyl-alpha-D-glucosamine: step 6/6. Transfers the gamma-phosphate of ATP to the 4'-position of a tetraacyldisaccharide 1-phosphate intermediate (termed DS-1-P) to form tetraacyldisaccharide 1,4'-bis-phosphate (lipid IVA). The chain is Tetraacyldisaccharide 4'-kinase from Elusimicrobium minutum (strain Pei191).